Reading from the N-terminus, the 530-residue chain is Cytochrome P450 monooxygenase sttB (530 aa).

N-linked (GlcNAc...) asparagine glycosylation is present at Asn-5. The chain crosses the membrane as a helical span at residues 24–44 (LPILTVALLTGIASAVYINVS). Asn-230 carries an N-linked (GlcNAc...) asparagine glycan.

This sequence belongs to the cytochrome P450 family. It depends on heme as a cofactor.

It localises to the membrane. The catalysed reaction is preaspterpenacid acid I + reduced [NADPH--hemoprotein reductase] + O2 = preaspterpenacid acid II + oxidized [NADPH--hemoprotein reductase] + H2O + H(+). The protein operates within secondary metabolite biosynthesis; terpenoid biosynthesis. Its function is as follows. Cytochrome P450 monooxygenase; part of the gene cluster that mediates the biosynthesis of aspterpenacids. Performs the C22-oxidative modification of the terpene synthase sttA product preaspterpenacid I to produce preaspterpenacid II. It has still to be determined how preaspterpenacid II is further modified to produce aspterpenacids. The sequence is that of Cytochrome P450 monooxygenase sttB from Aspergillus terreus (strain NIH 2624 / FGSC A1156).